We begin with the raw amino-acid sequence, 572 residues long: Sulfate adenylyltransferase (572 aa).

An N-terminal region spans residues 1–169; it reads MANTPHGGVL…IQAINKLNHY (169 aa). Residues 170–394 are catalytic; that stretch reads DYVGLRYTPA…LRESHPPRAK (225 aa). A sulfate-binding site is contributed by glutamine 197. Residues 197 to 200 and 291 to 294 contribute to the ATP site; these read QTRN and GRDH. Catalysis depends on residues threonine 198, arginine 199, and asparagine 200. Residue arginine 199 coordinates sulfate. Alanine 295 is a sulfate binding site. ATP is bound at residue methionine 333. The allosteric regulation domain; adenylyl-sulfate kinase-like stretch occupies residues 395–572; it reads QGFTIFLTGH…LLESQGFFGN (178 aa). 3'-phosphoadenylyl sulfate contacts are provided by residues 434 to 437, arginine 451, 477 to 478, and lysine 515; these read ETVR and IA.

It in the N-terminal section; belongs to the sulfate adenylyltransferase family. In the C-terminal section; belongs to the APS kinase family. As to quaternary structure, homohexamer. Dimer of trimers.

The protein resides in the cytoplasm. It carries out the reaction sulfate + ATP + H(+) = adenosine 5'-phosphosulfate + diphosphate. The protein operates within sulfur metabolism; hydrogen sulfide biosynthesis; sulfite from sulfate: step 1/3. Its activity is regulated as follows. Allosterically inhibited by 3'-phosphoadenosine 5'-phosphosulfate (PAPS). In terms of biological role, catalyzes the first intracellular reaction of sulfate assimilation, forming adenosine-5'-phosphosulfate (APS) from inorganic sulfate and ATP. Plays an important role in sulfate activation as a component of the biosynthesis pathway of sulfur-containing amino acids. In Yarrowia lipolytica (strain CLIB 122 / E 150) (Yeast), this protein is Sulfate adenylyltransferase.